The primary structure comprises 208 residues: Uracil phosphoribosyltransferase (208 aa).

5-phospho-alpha-D-ribose 1-diphosphate contacts are provided by residues R78, R103, and 130-138; that span reads DPMLATGGS. Uracil is bound by residues I193 and 198-200; that span reads GDA. A 5-phospho-alpha-D-ribose 1-diphosphate-binding site is contributed by D199.

The protein belongs to the UPRTase family. Requires Mg(2+) as cofactor.

The catalysed reaction is UMP + diphosphate = 5-phospho-alpha-D-ribose 1-diphosphate + uracil. It functions in the pathway pyrimidine metabolism; UMP biosynthesis via salvage pathway; UMP from uracil: step 1/1. Allosterically activated by GTP. Its function is as follows. Catalyzes the conversion of uracil and 5-phospho-alpha-D-ribose 1-diphosphate (PRPP) to UMP and diphosphate. The protein is Uracil phosphoribosyltransferase of Shewanella putrefaciens (strain CN-32 / ATCC BAA-453).